Consider the following 133-residue polypeptide: Ribonuclease P protein component (133 aa).

Belongs to the RnpA family. As to quaternary structure, consists of a catalytic RNA component (M1 or rnpB) and a protein subunit.

It carries out the reaction Endonucleolytic cleavage of RNA, removing 5'-extranucleotides from tRNA precursor.. In terms of biological role, RNaseP catalyzes the removal of the 5'-leader sequence from pre-tRNA to produce the mature 5'-terminus. It can also cleave other RNA substrates such as 4.5S RNA. The protein component plays an auxiliary but essential role in vivo by binding to the 5'-leader sequence and broadening the substrate specificity of the ribozyme. This Bartonella quintana (strain Toulouse) (Rochalimaea quintana) protein is Ribonuclease P protein component.